The following is a 164-amino-acid chain: CASP-like protein 1C2 (164 aa).

The Cytoplasmic segment spans residues 1 to 8; it reads MAVELKKV. Residues 9 to 29 traverse the membrane as a helical segment; it reads FSTILRFLALAATVVAVIVMI. The Extracellular segment spans residues 30-53; that stretch reads RSHDSAIVLNLTFSAKYNNTPAFK. Asn-39 is a glycosylation site (N-linked (GlcNAc...) asparagine). Residues 54–74 traverse the membrane as a helical segment; the sequence is YFVIAEGIASVYTIIVIFLWS. Topologically, residues 75–80 are cytoplasmic; sequence KGLLGR. The helical transmembrane segment at 81–101 threads the bilayer; it reads LIVILDMVTTVLLTSSISAAL. Residues 102-129 lie on the Extracellular side of the membrane; the sequence is AIAQVGKKGNSHAGWLPVCGQVPKFCDQ. The chain crosses the membrane as a helical span at residues 130 to 150; that stretch reads AIIALVAGFVAAIVYFMLLLC. Topologically, residues 151–164 are cytoplasmic; that stretch reads SLHAVLTPIFAVKP.

This sequence belongs to the Casparian strip membrane proteins (CASP) family. Homodimer and heterodimers.

It localises to the cell membrane. The sequence is that of CASP-like protein 1C2 from Ricinus communis (Castor bean).